A 271-amino-acid chain; its full sequence is 2-dehydro-3-deoxyphosphooctonate aldolase (271 aa).

It belongs to the KdsA family.

It is found in the cytoplasm. The catalysed reaction is D-arabinose 5-phosphate + phosphoenolpyruvate + H2O = 3-deoxy-alpha-D-manno-2-octulosonate-8-phosphate + phosphate. The protein operates within carbohydrate biosynthesis; 3-deoxy-D-manno-octulosonate biosynthesis; 3-deoxy-D-manno-octulosonate from D-ribulose 5-phosphate: step 2/3. It functions in the pathway bacterial outer membrane biogenesis; lipopolysaccharide biosynthesis. This chain is 2-dehydro-3-deoxyphosphooctonate aldolase, found in Campylobacter jejuni subsp. jejuni serotype O:6 (strain 81116 / NCTC 11828).